The primary structure comprises 444 residues: Proline--tRNA ligase (444 aa).

The protein belongs to the class-II aminoacyl-tRNA synthetase family. ProS type 2 subfamily. As to quaternary structure, homodimer.

It localises to the cytoplasm. It carries out the reaction tRNA(Pro) + L-proline + ATP = L-prolyl-tRNA(Pro) + AMP + diphosphate. In terms of biological role, catalyzes the attachment of proline to tRNA(Pro) in a two-step reaction: proline is first activated by ATP to form Pro-AMP and then transferred to the acceptor end of tRNA(Pro). The protein is Proline--tRNA ligase of Methylobacterium sp. (strain 4-46).